We begin with the raw amino-acid sequence, 252 residues long: LexA repressor (252 aa).

A disordered region spans residues M1 to R46. Positions I67–K87 form a DNA-binding region, H-T-H motif. Residues S176 and K213 each act as for autocatalytic cleavage activity in the active site.

Belongs to the peptidase S24 family. As to quaternary structure, homodimer.

It catalyses the reaction Hydrolysis of Ala-|-Gly bond in repressor LexA.. In terms of biological role, represses a number of genes involved in the response to DNA damage (SOS response), including recA and lexA. In the presence of single-stranded DNA, RecA interacts with LexA causing an autocatalytic cleavage which disrupts the DNA-binding part of LexA, leading to derepression of the SOS regulon and eventually DNA repair. This Thermobifida fusca (strain YX) protein is LexA repressor.